The following is a 394-amino-acid chain: Elongation factor Tu (394 aa).

Positions 10 to 204 (KPHLNVGTIG…TLDTYIEDPV (195 aa)) constitute a tr-type G domain. The segment at 19 to 26 (GHVDHGKT) is G1. Residue 19-26 (GHVDHGKT) coordinates GTP. Thr-26 contacts Mg(2+). Residues 60 to 64 (GITIK) form a G2 region. The tract at residues 81 to 84 (DCPG) is G3. GTP is bound by residues 81–85 (DCPGH) and 136–139 (NKCD). Positions 136–139 (NKCD) are G4. Residues 174–176 (SAL) are G5.

Belongs to the TRAFAC class translation factor GTPase superfamily. Classic translation factor GTPase family. EF-Tu/EF-1A subfamily. In terms of assembly, monomer.

Its subcellular location is the cytoplasm. It catalyses the reaction GTP + H2O = GDP + phosphate + H(+). Its function is as follows. GTP hydrolase that promotes the GTP-dependent binding of aminoacyl-tRNA to the A-site of ribosomes during protein biosynthesis. The chain is Elongation factor Tu from Onion yellows phytoplasma (strain OY-M).